Reading from the N-terminus, the 59-residue chain is Large ribosomal subunit protein bL32 (59 aa).

It belongs to the bacterial ribosomal protein bL32 family.

This is Large ribosomal subunit protein bL32 from Synechococcus sp. (strain JA-2-3B'a(2-13)) (Cyanobacteria bacterium Yellowstone B-Prime).